A 286-amino-acid polypeptide reads, in one-letter code: Prepilin leader peptidase/N-methyltransferase (286 aa).

A helical membrane pass occupies residues 10 to 30 (FAVPLAAVLGLLVGSFLNVVI). Zn(2+) is bound by residues Cys-70, Cys-73, Cys-95, and Cys-98. 6 consecutive transmembrane segments (helical) span residues 102–122 (ISIR…LVAW), 126–146 (WSWI…LTFI), 157–177 (MTLP…FVPL), 181–201 (VLGA…YKLL), 224–244 (ISAL…AAIV), and 250–270 (GRHF…FTAN).

Belongs to the peptidase A24 family. Zn(2+) serves as cofactor.

It is found in the cell inner membrane. It catalyses the reaction Typically cleaves a -Gly-|-Phe- bond to release an N-terminal, basic peptide of 5-8 residues from type IV prepilin, and then N-methylates the new N-terminal amino group, the methyl donor being S-adenosyl-L-methionine.. Functionally, plays an essential role in type IV pili and type II pseudopili formation by proteolytically removing the leader sequence from substrate proteins and subsequently monomethylating the alpha-amino group of the newly exposed N-terminal phenylalanine. In Neisseria gonorrhoeae, this protein is Prepilin leader peptidase/N-methyltransferase (pilD).